A 243-amino-acid chain; its full sequence is Large ribosomal subunit protein uL30 (243 aa).

Positions 1–31 (MADKILTPESQLKKSKAQQKSAEQVAAERAA) are disordered. Residues 18-28 (QQKSAEQVAAE) are compositionally biased toward low complexity.

This sequence belongs to the universal ribosomal protein uL30 family.

In Eremothecium gossypii (strain ATCC 10895 / CBS 109.51 / FGSC 9923 / NRRL Y-1056) (Yeast), this protein is Large ribosomal subunit protein uL30 (RPL7).